The following is a 305-amino-acid chain: Serine/threonine-protein phosphatase PP-X homolog 3 (305 aa).

D53, H55, D81, and N113 together coordinate Mn(2+). Catalysis depends on H114, which acts as the Proton donor. Mn(2+) contacts are provided by H163 and H237.

It belongs to the PPP phosphatase family. PP-4 (PP-X) subfamily. It depends on Mn(2+) as a cofactor.

The enzyme catalyses O-phospho-L-seryl-[protein] + H2O = L-seryl-[protein] + phosphate. It carries out the reaction O-phospho-L-threonyl-[protein] + H2O = L-threonyl-[protein] + phosphate. The polypeptide is Serine/threonine-protein phosphatase PP-X homolog 3 (Ppx3) (Paramecium tetraurelia).